The primary structure comprises 117 residues: MKSTFKSEYPFEKRKAESERIADRFKNRIPVICEKAEKSDIPEIDKRKYLVPADLTVGQFVYVIRKRIMLPPEKAIFIFVNDTLPPTAALMSAIYQEHKDKDGFLYVTYSGENTFGR.

Residue Gly116 is the site of Phosphatidylethanolamine amidated glycine attachment. Residue Arg117 is a propeptide, removed in mature form.

This sequence belongs to the ATG8 family. Conjugation to phosphatidylethanolamine (PE) leads to homodimerization. Interacts with ATG1, ATG3, ATG4, ATG7, ATG12, ATG32, ATG34 and the C-terminal 10 residues domain of ATG19. Also interacts with the endoplasmic reticulum to Golgi v-SNARE protein BET1 and the vacuolar v-SNARE protein NYV1. Interacts with the UBX domain-containing protein SHP1. Interacts with the vacuolar membrane protein HFL1. Interact with ATG45. Post-translationally, the C-terminal Arg-117 residue of ATG8 is removed by ATG4 to expose Gly-116 at the C-terminus. This Gly-116 forms then a thioester bond with the 'Cys-507' of ATG7 (E1-like activating enzyme) before being transferred to the 'Cys-234' of ATG3 (the specific E2 conjugating enzyme), in order to be finally amidated with phosphatidylethanolamine. This lipid modification anchors ATG8 to membranes and can be reversed by ATG4, releasing soluble ATG8.

It is found in the cytoplasmic vesicle. The protein resides in the cvt vesicle membrane. Its subcellular location is the autophagosome membrane. The protein localises to the vacuole membrane. Ubiquitin-like modifier involved in cytoplasm to vacuole transport (Cvt) vesicles and autophagosome formation. With ATG4, mediates the delivery of the vesicles and autophagosomes to the vacuole via the microtubule cytoskeleton. Required for selective autophagic degradation of the nucleus (nucleophagy) as well as for mitophagy which contributes to regulate mitochondrial quantity and quality by eliminating the mitochondria to a basal level to fulfill cellular energy requirements and preventing excess ROS production. Participates also in membrane fusion events that take place in the early secretory pathway. Also involved in endoplasmic reticulum-specific autophagic process and is essential for the survival of cells subjected to severe ER stress. The ATG8-PE conjugate mediates tethering between adjacent membranes and stimulates membrane hemifusion, leading to expansion of the autophagosomal membrane during autophagy. Moreover not only conjugation, but also subsequent ATG8-PE deconjugation is an important step required to facilitate multiple events during macroautophagy, and especially for efficient autophagosome biogenesis, the assembly of ATG9-containing tubulovesicular clusters into phagophores/autophagosomes, and for the disassembly of PAS-associated ATG components. Also plays a role in regulation of filamentous growth. In Saccharomyces cerevisiae (strain YJM789) (Baker's yeast), this protein is Autophagy-related protein 8 (ATG8).